An 830-amino-acid polypeptide reads, in one-letter code: Receptor-like protein kinase HERK 1 (830 aa).

A signal peptide spans 1 to 24 (MGIEKFETFILISTISILLCICHG). Topologically, residues 25-405 (FTPVDNYLIN…SSSSSKSNLG (381 aa)) are extracellular. 5 N-linked (GlcNAc...) asparagine glycosylation sites follow: asparagine 40, asparagine 146, asparagine 217, asparagine 280, and asparagine 381. Residues 406–426 (LIVGSAIGSLLAVVFLGSCFV) traverse the membrane as a helical segment. Residues 427–830 (LYKKRKRGQD…FSQLVKSEGR (404 aa)) are Cytoplasmic-facing. The Protein kinase domain maps to 485–758 (FDESRNIGVG…GDVLWNLEYA (274 aa)). ATP contacts are provided by residues 491–499 (IGVGGFGKV) and lysine 513. The active-site Proton acceptor is aspartate 609.

Belongs to the protein kinase superfamily. Ser/Thr protein kinase family. Autophosphorylated. As to expression, expressed in most vegetative tissues, including leaves, stems and roots, especially in cell elongation regions.

It is found in the cell membrane. Receptor-like protein kinase required for cell elongation during vegetative growth, mostly in a brassinosteroid-(BR-) independent manner. In Arabidopsis thaliana (Mouse-ear cress), this protein is Receptor-like protein kinase HERK 1 (HERK1).